The primary structure comprises 305 residues: Insulin-like peptide (305 aa).

A signal peptide spans 1-22; it reads MNLSSVYVLASLAVVCLLVKET. Disulfide bonds link cysteine 28-cysteine 87, cysteine 40-cysteine 100, and cysteine 86-cysteine 91. Residues 52–76 constitute a propeptide, connecting peptide; that stretch reads SVSKRAIDFISEQQAKDYMGAMPHI. Residues 102–114 form a d region; that stretch reads PYSTAPATATPVR. The propeptide at 102–305 is d/E peptide; it reads PYSTAPATAT…RDSYHLTELR (204 aa). A compositionally biased stretch (low complexity) spans 107–118; it reads PATATPVRTTEP. Disordered stretches follow at residues 107 to 130 and 236 to 305; these read PATA…PLDG and HNQT…TELR. Residues 115-305 form an e region; it reads TTEPQPEEAE…RDSYHLTELR (191 aa). Residues 119-128 are compositionally biased toward acidic residues; that stretch reads QPEEAEDDPL. Basic and acidic residues-rich tracts occupy residues 236-245 and 291-305; these read HNQTDKKEPT and RRIE…TELR.

Belongs to the insulin family.

It localises to the secreted. This Branchiostoma californiense (California lancelet) protein is Insulin-like peptide (ILP).